We begin with the raw amino-acid sequence, 368 residues long: MTVKLTIDCMGGDHGPSVTVPAAVKFVRAHPDAHLMLVGIESAIRAQLKKLKALDDPALTIVPATEVVAMDDPVEVALRKKKDSSMRVALNQVKEGAAQACISAGNTGALMAVSRYVLKTLPGIERPAIAFALPNPTGYTMMLDLGANVDCEPQHLLQFAEMGHALVAALEGKERPTIGLLNIGEEVIKGNETIKRAGELLRASTLNFRGNVEGNDIYKGTVDVIVCDGFVGNVALKTSEGLAQMLSDIIREEFGRSLMSKLMALLALPVLMRFKKRVDHRQYNGAALLGLKGLVIKSHGSADAYAFEWAIKRGYDAVKNGVLERLARAMADNSVSLGDGGHDAGGAGTASPAPGHHAEPSAAQSSKA.

Residues 338 to 368 (GDGGHDAGGAGTASPAPGHHAEPSAAQSSKA) are disordered.

It belongs to the PlsX family. Homodimer. Probably interacts with PlsY.

Its subcellular location is the cytoplasm. It carries out the reaction a fatty acyl-[ACP] + phosphate = an acyl phosphate + holo-[ACP]. The protein operates within lipid metabolism; phospholipid metabolism. Functionally, catalyzes the reversible formation of acyl-phosphate (acyl-PO(4)) from acyl-[acyl-carrier-protein] (acyl-ACP). This enzyme utilizes acyl-ACP as fatty acyl donor, but not acyl-CoA. This Burkholderia ambifaria (strain MC40-6) protein is Phosphate acyltransferase.